A 167-amino-acid chain; its full sequence is 3-dehydroquinate dehydratase (167 aa).

Tyr22 functions as the Proton acceptor in the catalytic mechanism. The substrate site is built by Asn76, His82, and Asp89. Catalysis depends on His102, which acts as the Proton donor. Substrate is bound by residues 103 to 104 (LT) and Arg113.

This sequence belongs to the type-II 3-dehydroquinase family. Homododecamer.

The enzyme catalyses 3-dehydroquinate = 3-dehydroshikimate + H2O. It functions in the pathway metabolic intermediate biosynthesis; chorismate biosynthesis; chorismate from D-erythrose 4-phosphate and phosphoenolpyruvate: step 3/7. In terms of biological role, catalyzes a trans-dehydration via an enolate intermediate. In Helicobacter pylori (strain P12), this protein is 3-dehydroquinate dehydratase.